The chain runs to 354 residues: Dihydroorotate dehydrogenase (quinone) (354 aa).

FMN-binding positions include 70–74 (AGFDK) and T94. K74 lines the substrate pocket. 119-123 (NAMGF) provides a ligand contact to substrate. Residues N148 and N181 each coordinate FMN. Residue N181 participates in substrate binding. S184 acts as the Nucleophile in catalysis. Residue N186 participates in substrate binding. Positions 217 and 245 each coordinate FMN. 246–247 (NT) contacts substrate. FMN contacts are provided by residues G265, G294, and 315–316 (YS).

It belongs to the dihydroorotate dehydrogenase family. Type 2 subfamily. In terms of assembly, monomer. FMN is required as a cofactor.

The protein resides in the cell membrane. The catalysed reaction is (S)-dihydroorotate + a quinone = orotate + a quinol. It participates in pyrimidine metabolism; UMP biosynthesis via de novo pathway; orotate from (S)-dihydroorotate (quinone route): step 1/1. Catalyzes the conversion of dihydroorotate to orotate with quinone as electron acceptor. The sequence is that of Dihydroorotate dehydrogenase (quinone) from Sulfurovum sp. (strain NBC37-1).